Reading from the N-terminus, the 560-residue chain is Dihydroxy-acid dehydratase (560 aa).

[2Fe-2S] cluster is bound at residue C50. D82 provides a ligand contact to Mg(2+). Residue C123 participates in [2Fe-2S] cluster binding. The Mg(2+) site is built by D124 and K125. The residue at position 125 (K125) is an N6-carboxylysine. Residue C195 coordinates [2Fe-2S] cluster. E446 is a Mg(2+) binding site. S472 serves as the catalytic Proton acceptor.

This sequence belongs to the IlvD/Edd family. As to quaternary structure, homodimer. Requires [2Fe-2S] cluster as cofactor. Mg(2+) is required as a cofactor.

It carries out the reaction (2R)-2,3-dihydroxy-3-methylbutanoate = 3-methyl-2-oxobutanoate + H2O. The enzyme catalyses (2R,3R)-2,3-dihydroxy-3-methylpentanoate = (S)-3-methyl-2-oxopentanoate + H2O. Its pathway is amino-acid biosynthesis; L-isoleucine biosynthesis; L-isoleucine from 2-oxobutanoate: step 3/4. The protein operates within amino-acid biosynthesis; L-valine biosynthesis; L-valine from pyruvate: step 3/4. Functionally, functions in the biosynthesis of branched-chain amino acids. Catalyzes the dehydration of (2R,3R)-2,3-dihydroxy-3-methylpentanoate (2,3-dihydroxy-3-methylvalerate) into 2-oxo-3-methylpentanoate (2-oxo-3-methylvalerate) and of (2R)-2,3-dihydroxy-3-methylbutanoate (2,3-dihydroxyisovalerate) into 2-oxo-3-methylbutanoate (2-oxoisovalerate), the penultimate precursor to L-isoleucine and L-valine, respectively. The protein is Dihydroxy-acid dehydratase of Leptothrix cholodnii (strain ATCC 51168 / LMG 8142 / SP-6) (Leptothrix discophora (strain SP-6)).